Here is a 31-residue protein sequence, read N- to C-terminus: MESLVYIFVFVVALGVLFFAIAFREPPRIGK.

A helical membrane pass occupies residues Ser-3–Phe-23.

Belongs to the PsbT family. PSII is composed of 1 copy each of membrane proteins PsbA, PsbB, PsbC, PsbD, PsbE, PsbF, PsbH, PsbI, PsbJ, PsbK, PsbL, PsbM, PsbT, PsbX, PsbY, PsbZ, Psb30/Ycf12, peripheral proteins PsbO, CyanoQ (PsbQ), PsbU, PsbV and a large number of cofactors. It forms dimeric complexes.

It is found in the cellular thylakoid membrane. Its function is as follows. Found at the monomer-monomer interface of the photosystem II (PS II) dimer, plays a role in assembly and dimerization of PSII. PSII is a light-driven water plastoquinone oxidoreductase, using light energy to abstract electrons from H(2)O, generating a proton gradient subsequently used for ATP formation. This is Photosystem II reaction center protein T from Synechococcus elongatus (strain ATCC 33912 / PCC 7942 / FACHB-805) (Anacystis nidulans R2).